A 1504-amino-acid chain; its full sequence is NAC-alpha domain-containing protein 1 (1504 aa).

Disordered regions lie at residues 127 to 150 (KPGA…ASAW), 208 to 261 (DREG…HGPH), 315 to 356 (PSDW…SSWS), 396 to 436 (LPQE…STSA), 460 to 525 (DTSA…TNSQ), 539 to 565 (GLES…TPTV), 701 to 812 (VLPP…EEGV), 834 to 1064 (DLES…LPVA), 1099 to 1366 (PFQH…AMSK), and 1430 to 1467 (PSEP…GLEP). Low complexity predominate over residues 342-354 (SSESSLSADSSSS). Acidic residues predominate over residues 398–407 (QEEEEDEEDV). 2 stretches are compositionally biased toward low complexity: residues 408–422 (AATA…ATPD) and 462–475 (SAAS…SYAG). A compositionally biased stretch (polar residues) spans 510 to 525 (STPQTSEQEICLTNSQ). Over residues 775–792 (PQESPTASSLTLQSSHPT) the composition is skewed to polar residues. A compositionally biased stretch (low complexity) spans 930–939 (PPASNQAQQN). Residues 958 to 968 (STLSTKTSEPT) show a composition bias toward polar residues. A compositionally biased stretch (basic and acidic residues) spans 989 to 1005 (EAHDGVKTHSPQREALR). Ser998 carries the phosphoserine modification. Residues 1016-1031 (SPGQGNGPKSATSQGA) show a composition bias toward polar residues. Positions 1159–1171 (PGPPDPCLCPPPQ) are enriched in pro residues. Positions 1213–1222 (VSLSPHSTLN) are enriched in polar residues. Phosphoserine is present on Ser1268. Residues 1354–1419 (SRSEKKARKA…AKIEDLSQQV (66 aa)) enclose the NAC-A/B domain. A compositionally biased stretch (acidic residues) spans 1451-1464 (EEQEEEDEEVEEAG).

This sequence belongs to the NAC-alpha family.

Its subcellular location is the cytoplasm. It localises to the nucleus. Its function is as follows. May prevent inappropriate targeting of non-secretory polypeptides to the endoplasmic reticulum (ER). May bind to nascent polypeptide chains as they emerge from the ribosome and block their interaction with the signal recognition particle (SRP), which normally targets nascent secretory peptides to the ER. May also reduce the inherent affinity of ribosomes for protein translocation sites in the ER membrane (M sites). This Mus musculus (Mouse) protein is NAC-alpha domain-containing protein 1 (Nacad).